The primary structure comprises 82 residues: Small ribosomal subunit protein bS16 (82 aa).

It belongs to the bacterial ribosomal protein bS16 family.

The sequence is that of Small ribosomal subunit protein bS16 from Photorhabdus laumondii subsp. laumondii (strain DSM 15139 / CIP 105565 / TT01) (Photorhabdus luminescens subsp. laumondii).